Consider the following 263-residue polypeptide: Ribosomal RNA small subunit methyltransferase A (263 aa).

The S-adenosyl-L-methionine site is built by I18, G43, E65, D91, and N110.

It belongs to the class I-like SAM-binding methyltransferase superfamily. rRNA adenine N(6)-methyltransferase family. RsmA subfamily.

The protein resides in the cytoplasm. It carries out the reaction adenosine(1518)/adenosine(1519) in 16S rRNA + 4 S-adenosyl-L-methionine = N(6)-dimethyladenosine(1518)/N(6)-dimethyladenosine(1519) in 16S rRNA + 4 S-adenosyl-L-homocysteine + 4 H(+). Functionally, specifically dimethylates two adjacent adenosines (A1518 and A1519) in the loop of a conserved hairpin near the 3'-end of 16S rRNA in the 30S particle. May play a critical role in biogenesis of 30S subunits. This chain is Ribosomal RNA small subunit methyltransferase A, found in Ehrlichia chaffeensis (strain ATCC CRL-10679 / Arkansas).